The chain runs to 349 residues: MSKETLVLLYGGRSAERDVSVLSAESVMRAINYDNFLVKTYFITQAGDFIKTQEFDSQPSETDKLMTNDTIIASQKIKPSDIYEEEAVVFPVLHGPMGEDGSIQGFLEVLKMPYVGTNILSSSVAMDKITTNQVLESATTIPQVAYVALIEGEPLESKLAEVEEKLIYPVFVKPANMGSSVGISKAENRTDLKQAIALALKYDSRVLIEQGVDAREIEVGILGNTDVKTTLPGEIVKDVAFYDYEAKYIDNKITMAIPAEIDPVIVEKMRDYAATAFRTLGCCGLSRCDFFLTEDGKVYLNELNTMPGFTQWSMYPLLWENMGLSYSVLIEELVSLAKEMFDKRESHLV.

The region spanning glutamine 133–serine 335 is the ATP-grasp domain. Residue glutamate 163–glutamate 218 participates in ATP binding. Residues aspartate 289, glutamate 302, and asparagine 304 each contribute to the Mg(2+) site.

It belongs to the D-alanine--D-alanine ligase family. Mg(2+) serves as cofactor. Requires Mn(2+) as cofactor.

Its subcellular location is the cytoplasm. It carries out the reaction 2 D-alanine + ATP = D-alanyl-D-alanine + ADP + phosphate + H(+). It functions in the pathway cell wall biogenesis; peptidoglycan biosynthesis. Its function is as follows. Cell wall formation. The protein is D-alanine--D-alanine ligase of Streptococcus mutans serotype c (strain ATCC 700610 / UA159).